The primary structure comprises 249 residues: Ribonuclease 3 (249 aa).

The RNase III domain occupies 20-149 (FKEFQERISV…FIGALYLDQG (130 aa)). Position 62 (E62) interacts with Mg(2+). Residue D66 is part of the active site. Residues D135 and E138 each coordinate Mg(2+). E138 is an active-site residue. The DRBM domain occupies 175-244 (DFKSQLQEFV…AQEALAKMQK (70 aa)). The segment at 223 to 249 (NGRSKKEAEQHAAQEALAKMQKHHTKQ) is disordered.

This sequence belongs to the ribonuclease III family. Homodimer. The cofactor is Mg(2+).

It is found in the cytoplasm. The enzyme catalyses Endonucleolytic cleavage to 5'-phosphomonoester.. In terms of biological role, digests double-stranded RNA. Involved in the processing of primary rRNA transcript to yield the immediate precursors to the large and small rRNAs (23S and 16S). Processes some mRNAs, and tRNAs when they are encoded in the rRNA operon. Processes pre-crRNA and tracrRNA of type II CRISPR loci if present in the organism. The protein is Ribonuclease 3 of Bacillus velezensis (strain DSM 23117 / BGSC 10A6 / LMG 26770 / FZB42) (Bacillus amyloliquefaciens subsp. plantarum).